Reading from the N-terminus, the 278-residue chain is Large ribosomal subunit protein uL2 (278 aa).

The interval 218–278 is disordered; that stretch reads RPHNRGVVMN…IMRSRHQRKK (61 aa).

The protein belongs to the universal ribosomal protein uL2 family. In terms of assembly, part of the 50S ribosomal subunit. Forms a bridge to the 30S subunit in the 70S ribosome.

Functionally, one of the primary rRNA binding proteins. Required for association of the 30S and 50S subunits to form the 70S ribosome, for tRNA binding and peptide bond formation. It has been suggested to have peptidyltransferase activity; this is somewhat controversial. Makes several contacts with the 16S rRNA in the 70S ribosome. The polypeptide is Large ribosomal subunit protein uL2 (Rhizobium etli (strain ATCC 51251 / DSM 11541 / JCM 21823 / NBRC 15573 / CFN 42)).